A 173-amino-acid polypeptide reads, in one-letter code: MPRTQNKDNFIDKTFTVMADLIVKMMPINDKAKRAYVYYRDGLSAQNAGDYAEALENYEESLKLEESPFDRSETLKNMAIIYMSNGDEDLALDTYQRALDQNSNQPSCLKNMGLIYEKRGRTAQEAGLQDEADRLFDRAADVWTQAVRLYPGGYLDIENWLKTTGRSNIDVYF.

3 TPR repeats span residues Ala35–Pro68, Ser72–Gln105, and Gly120–Gly153.

It belongs to the Ycf3 family.

It localises to the cellular thylakoid membrane. Functionally, essential for the assembly of the photosystem I (PSI) complex. May act as a chaperone-like factor to guide the assembly of the PSI subunits. The protein is Photosystem I assembly protein Ycf3 of Prochlorococcus marinus (strain MIT 9313).